We begin with the raw amino-acid sequence, 98 residues long: Sm-like protein LSM3B (98 aa).

Ser2 is subject to N-acetylserine. The Sm domain occupies 11 to 96 (EPLDLIRLSL…VILVSPPLRT (86 aa)).

It belongs to the snRNP Sm proteins family. In terms of assembly, component of the heptameric LSM1-LSM7 complex that forms a seven-membered ring structure with a donut shape. The LSM subunits are arranged in the order LSM1, LSM2, LSM3, LSM6, LSM5, LSM7 and LSM4. Component of the heptameric LSM2-LSM8 complex that forms a seven-membered ring structure with a donut shape. The LSM subunits are arranged in the order LSM8, LSM2, LSM3, LSM6, LSM5, LSM7 and LSM4. LSM3B subunit interacts only with its two neighboring subunits, LSM2 and LSM6A or LSM6B. In terms of tissue distribution, expressed in roots, leaves, stems, flowers and siliques.

Its subcellular location is the cytoplasm. The protein localises to the nucleus. Its function is as follows. Component of LSM protein complexes, which are involved in RNA processing. Component of the cytoplasmic LSM1-LSM7 complex which is involved in mRNA degradation by promoting decapping and leading to accurate 5'-3' mRNA decay. The cytoplasmic LSM1-LSM7 complex regulates developmental gene expression by the decapping of specific development-related transcripts. Component of the nuclear LSM2-LSM8 complex which is involved splicing nuclear mRNAs. LSM2-LSM8 binds directly to the U6 small nuclear RNAs (snRNAs) and is essential for accurate splicing of selected development-related mRNAs through the stabilization of the spliceosomal U6 snRNA. Plays a critical role in the regulation of development-related gene expression. The protein is Sm-like protein LSM3B of Arabidopsis thaliana (Mouse-ear cress).